We begin with the raw amino-acid sequence, 1031 residues long: Sister chromatid cohesion 1 protein 4 (1031 aa).

Residues 461 to 481 (TPDKEDPGTCNDDAGNNNITG) are disordered. The short motif at 545–552 (TKRLRSAP) is the Nuclear localization signal element. Disordered stretches follow at residues 661-703 (VEEN…EELK), 742-772 (EKLD…ADPN), and 803-835 (ELPH…VGST). Composition is skewed to basic and acidic residues over residues 742–762 (EKLD…HDGE) and 803–825 (ELPH…RDDQ).

The protein belongs to the rad21 family. Component of the cohesin complex. In terms of tissue distribution, expressed in tissues containing dividing cells such as seedlings, flower buds, flowers and inflorescence meristem tissue.

It localises to the nucleus. Its subcellular location is the chromosome. The protein resides in the centromere. Its function is as follows. Involved in sister chromatid and centromere cohesion during mitosis. This chain is Sister chromatid cohesion 1 protein 4 (SYN4), found in Arabidopsis thaliana (Mouse-ear cress).